The sequence spans 451 residues: Glycine--tRNA ligase (451 aa).

Residues arginine 101 and glutamate 151 each coordinate substrate. Residues 183–185 (RNE), 193–198 (FRTCEF), 267–268 (EL), and 312–315 (GLTR) each bind ATP. A substrate-binding site is contributed by 198-202 (FEQME). Position 308–312 (308–312 (ETSAG)) interacts with substrate.

This sequence belongs to the class-II aminoacyl-tRNA synthetase family. As to quaternary structure, homodimer.

The protein resides in the cytoplasm. It catalyses the reaction tRNA(Gly) + glycine + ATP = glycyl-tRNA(Gly) + AMP + diphosphate. In terms of biological role, catalyzes the attachment of glycine to tRNA(Gly). In Treponema denticola (strain ATCC 35405 / DSM 14222 / CIP 103919 / JCM 8153 / KCTC 15104), this protein is Glycine--tRNA ligase.